The chain runs to 485 residues: Terminase, large subunit (485 aa).

Residues 17–22, 40–45, and Arg79 contribute to the ADP site; these read KPHHVQ and QSGKSE. The interval 22–197 is ATPase activity; that stretch reads QLAIHRSTAK…EFFLMGWRGG (176 aa). Gln97 and Gln99 together coordinate ATP. Residues 125–131 carry the Walker A motif motif; it reads SEFRGKS. The Walker B motif signature appears at 145-150; that stretch reads FVILDE. The active-site For ATPase activity is the Glu150. Residues 256-438 are nuclease; that stretch reads SNSVFSGLDM…DIVMSLALAY (183 aa). Mg(2+) is bound by residues Asp294, Asp347, and Asp429.

It belongs to the Tequatrovirus large terminase family. Interacts with the terminase small subunit; the active complex is composed of a pentamer of terminase large subunits and a dodecamer of terminase small subunits. Interacts with the portal protein. Requires Mg(2+) as cofactor.

The terminase large subunit acts as an ATP driven molecular motor necessary for viral DNA translocation into empty capsids and as an endonuclease that cuts the viral genome to initiate and to end a packaging reaction The terminase lies at a unique vertex of the procapsid and is composed of two subunits, a small terminase subunit involved in viral DNA recognition (packaging sequence), and a large terminase subunit possessing endonucleolytic and ATPase activities. Both terminase subunits heterooligomerize and are docked on the portal protein to form the packaging machine. The terminase large subunit exhibits endonuclease activity and cleaves the viral genome concatemer. Once the capsid is packaged with the DNA, the terminase complex is substituted by the tail. The sequence is that of Terminase, large subunit from Thermus thermophilus (Thermus thermophilus phage P23-45).